Here is a 430-residue protein sequence, read N- to C-terminus: Keratin, type I cytoskeletal 18 (430 aa).

Position 2 is an N-acetylserine (S2). Residues 2-79 (SFTTRSTFST…GLAGMGGIQN (78 aa)) form a head region. Phosphoserine occurs at positions 7, 10, 15, and 18. Phosphoserine; alternate occurs at positions 30 and 31. Residues S30 and S31 are each glycosylated (O-linked (GlcNAc) serine; alternate). S34 carries the phosphoserine; by CDK1 modification. Y36 bears the Phosphotyrosine mark. At S42 the chain carries Phosphoserine. At R45 the chain carries Omega-N-methylarginine. S49 carries the post-translational modification Phosphoserine; alternate. S49 carries O-linked (GlcNAc) serine; alternate glycosylation. The residue at position 51 (S51) is a Phosphoserine; by MAPKAPK2 and MAPKAPK3. T52 bears the Phosphothreonine mark. Residue S53 is modified to Phosphoserine; by CAMK, PKC/PRKCE and AURKA. R55 carries the post-translational modification Omega-N-methylarginine. S60 is modified (phosphoserine). T65 carries the post-translational modification Phosphothreonine. Residues 70–373 (GLAGMGGIQN…EALLNIKVKL (304 aa)) are necessary for interaction with PNN. Residues 77–128 (IQNEKETMQSLNDRLASYLDRVRSLETENRRLESKIREHLEKKGPQVRDWSH) form an interaction with TRADD region. Residues 80–115 (EKETMQSLNDRLASYLDRVRSLETENRRLESKIREH) are coil 1A. The IF rod domain occupies 80–391 (EKETMQSLND…RLLEDGEDFN (312 aa)). A Glycyl lysine isopeptide (Lys-Gly) (interchain with G-Cter in SUMO2) cross-link involves residue K81. 2 positions are modified to phosphoserine: S93 and S100. Positions 116–132 (LEKKGPQVRDWSHYFKI) are linker 1. K131 carries the N6-acetyllysine modification. The segment at 133 to 224 (IEDLRAQIFA…KNHEEEVKGL (92 aa)) is coil 1B. Position 177 is a phosphoserine (S177). Residues 225 to 248 (QAQIASSGLTVEVDAPKSQDLAKI) are linker 12. The segment at 243 to 391 (QDLAKIMADI…RLLEDGEDFN (149 aa)) is interaction with DNAJB6. Residue K247 forms a Glycyl lysine isopeptide (Lys-Gly) (interchain with G-Cter in SUMO2) linkage. Residues 249–387 (MADIRAQYDE…ATYRRLLEDG (139 aa)) form a coil 2 region. At T302 the chain carries Phosphothreonine. 3 positions are modified to phosphoserine: S305, S319, and S323. Glycyl lysine isopeptide (Lys-Gly) (interchain with G-Cter in SUMO2) cross-links involve residues K370 and K372. Residues 388–430 (EDFNLGDALDSSNSMQTIQKTTTRRIVDGKVVSETNDTKVLRH) form a tail region. 3 positions are modified to phosphoserine: S398, S399, and S401. The residue at position 404 (T404) is a Phosphothreonine. K417 participates in a covalent cross-link: Glycyl lysine isopeptide (Lys-Gly) (interchain with G-Cter in SUMO2). K426 carries the N6-acetyllysine; alternate modification. K426 is covalently cross-linked (Glycyl lysine isopeptide (Lys-Gly) (interchain with G-Cter in SUMO1); alternate). K426 is covalently cross-linked (Glycyl lysine isopeptide (Lys-Gly) (interchain with G-Cter in SUMO2); alternate).

The protein belongs to the intermediate filament family. Heterotetramer of two type I and two type II keratins. KRT18 associates with KRT8. Interacts with PLEC isoform 1C, when in a heterodimer with KRT8. Interacts with the thrombin-antithrombin complex. Interacts with PNN and mutated CFTR. Interacts with YWHAE, YWHAH and YWHAZ only when phosphorylated. Interacts with DNAJB6, TCHP and TRADD. Interacts with FAM83H. Interacts with EPPK1. Interacts with PKP1 and PKP2. In terms of assembly, (Microbial infection) Interacts with hepatitis C virus/HCV core protein. In terms of processing, phosphorylation at Ser-34 increases during mitosis. Hyperphosphorylated at Ser-53 in diseased cirrhosis liver. Phosphorylation increases by IL-6. Proteolytically cleaved by caspases during epithelial cell apoptosis. Cleavage occurs at Asp-238 by either caspase-3, caspase-6 or caspase-7. Post-translationally, O-GlcNAcylation increases solubility, and decreases stability by inducing proteasomal degradation. As to expression, expressed in colon, placenta, liver and very weakly in exocervix. Increased expression observed in lymph nodes of breast carcinoma.

The protein localises to the nucleus matrix. It localises to the cytoplasm. Its subcellular location is the perinuclear region. It is found in the nucleus. The protein resides in the nucleolus. In terms of biological role, involved in the uptake of thrombin-antithrombin complexes by hepatic cells. When phosphorylated, plays a role in filament reorganization. Involved in the delivery of mutated CFTR to the plasma membrane. Together with KRT8, is involved in interleukin-6 (IL-6)-mediated barrier protection. The chain is Keratin, type I cytoskeletal 18 (KRT18) from Homo sapiens (Human).